Consider the following 546-residue polypeptide: Metal transporter Nramp6.2 (546 aa).

A run of 8 helical transmembrane segments spans residues 50–70, 83–103, 128–150, 154–176, 187–207, 233–253, 270–290, and 333–353; these read FLPY…PGNL, ELLW…SLAA, SLWL…GTAF, ILFH…LLLG, LLIS…LSYV, IALL…ALVL, YFLI…VSII, and IYAI…TYAG. N-linked (GlcNAc...) asparagine glycosylation occurs at asparagine 371. Transmembrane regions (helical) follow at residues 374 to 394, 397 to 417, 433 to 453, and 473 to 493; these read TRCI…SSGA, LIII…IPLL, IYII…NVYY, and VIIG…IIYL.

This sequence belongs to the NRAMP (TC 2.A.55) family.

Its subcellular location is the membrane. Its function is as follows. Probable divalent metal transporter. The protein is Metal transporter Nramp6.2 of Populus trichocarpa (Western balsam poplar).